The following is a 207-amino-acid chain: 2,3-bisphosphoglycerate-dependent phosphoglycerate mutase (207 aa).

Substrate-binding positions include 10 to 17 (RHGQSEWN), 23 to 24 (TG), arginine 62, 89 to 92 (ERDY), lysine 100, 116 to 117 (RR), and 160 to 161 (GN). The Tele-phosphohistidine intermediate role is filled by histidine 11. Glutamate 89 acts as the Proton donor/acceptor in catalysis.

Belongs to the phosphoglycerate mutase family. BPG-dependent PGAM subfamily. In terms of assembly, homodimer.

The catalysed reaction is (2R)-2-phosphoglycerate = (2R)-3-phosphoglycerate. It functions in the pathway carbohydrate degradation; glycolysis; pyruvate from D-glyceraldehyde 3-phosphate: step 3/5. Its function is as follows. Catalyzes the interconversion of 2-phosphoglycerate and 3-phosphoglycerate. This chain is 2,3-bisphosphoglycerate-dependent phosphoglycerate mutase, found in Bradyrhizobium sp. (strain ORS 278).